The chain runs to 684 residues: MFGFIHESIRQLVIRNYGEDTWTQVLERSGFESGKENIMNHYYSDTDTYVLVDSVSLVLKVTKDQVWEMYGGFLITYSMEIGWDELVRSMSPNLKGFLDNLDSLHYFIDHVVYKANLRGPSFRCEETPDGTLLLHYFTGRPGLYHIVKGVVKEVAKRVFDLDITLVVQGRTQRSVHMNNGERVEEHVVFLINNLSEPRRDSEGSEVSLLTSTNANFPTIVDDTLGISLDDFSKALPYHFVIDESCKLVQCGSELHNHIPNELLQPGTPILRIFEINRPQIPLDFENICNFINAVFVLQVKTSPLKKKHMDAMSQEELKQEMETLDEDATNELTQGHHLKLKGQMMLLASKKHIIYLCSPYVTSINELMQYGMRLTAMPLHDATRDLILLNQQRLSDVEVNLQLEANNEQLETMTRELELERQKTDSILKDMLPRRIAQQLLSGEHIEACEHEATVMFCDLPAFQQAIPQCSPKDIVNMLNEIFRKLDRIVVIRGVYKVETVSDSYMAVSGIPDYTPEHAENMCHVALGMMWEARSVIDPVSKTPFLLRIGIHSGTITAGVVGTVHPKYCLFGETVTLASQMESLGMAGKIQCSKWAYQKAMETGRFEFSPRGRIDVKQRGLTETYFLTRSLKKSIWEIIDHDRDINVNSIEGYEELETAIENAVTIKSALPRPDQRNSAACSIS.

His-105 contacts heme. The stretch at 396 to 432 (DVEVNLQLEANNEQLETMTRELELERQKTDSILKDML) forms a coiled coil. The Guanylate cyclase domain maps to 454–582 (TVMFCDLPAF…ETVTLASQME (129 aa)). Mg(2+) is bound by residues Asp-459 and Asp-503.

This sequence belongs to the adenylyl cyclase class-4/guanylyl cyclase family. In terms of assembly, heterodimer; with other soluble guanylate cyclases. Requires heme as cofactor. As to expression, expressed in a small number of neurons, corresponding to URX, AQR and PQR neurons.

It localises to the cytoplasm. The catalysed reaction is GTP = 3',5'-cyclic GMP + diphosphate. May be regulated by molecular oxygen. Probably not activated by nitric oxide (NO). In terms of biological role, synthesizes cyclic GMP (cGMP) from GTP. Influences aerotaxis responses, aggregation and bordering behaviors (gathering around the edge of a bacterial lawn) in combination with other soluble guanylate cyclases. In Caenorhabditis elegans, this protein is Soluble guanylate cyclase gcy-32 (gcy-32).